The sequence spans 293 residues: Bifunctional protein FolD (293 aa).

Residues 164–166 (GRS), Ser193, and Thr234 contribute to the NADP(+) site.

Belongs to the tetrahydrofolate dehydrogenase/cyclohydrolase family. In terms of assembly, homodimer.

It catalyses the reaction (6R)-5,10-methylene-5,6,7,8-tetrahydrofolate + NADP(+) = (6R)-5,10-methenyltetrahydrofolate + NADPH. The catalysed reaction is (6R)-5,10-methenyltetrahydrofolate + H2O = (6R)-10-formyltetrahydrofolate + H(+). It functions in the pathway one-carbon metabolism; tetrahydrofolate interconversion. Catalyzes the oxidation of 5,10-methylenetetrahydrofolate to 5,10-methenyltetrahydrofolate and then the hydrolysis of 5,10-methenyltetrahydrofolate to 10-formyltetrahydrofolate. This chain is Bifunctional protein FolD, found in Phocaeicola vulgatus (strain ATCC 8482 / DSM 1447 / JCM 5826 / CCUG 4940 / NBRC 14291 / NCTC 11154) (Bacteroides vulgatus).